Here is a 308-residue protein sequence, read N- to C-terminus: Ribonuclease Z (308 aa).

7 residues coordinate Zn(2+): His-61, His-63, Asp-65, His-66, His-142, Asp-211, and His-270. The active-site Proton acceptor is the Asp-65.

It belongs to the RNase Z family. In terms of assembly, homodimer. It depends on Zn(2+) as a cofactor.

It catalyses the reaction Endonucleolytic cleavage of RNA, removing extra 3' nucleotides from tRNA precursor, generating 3' termini of tRNAs. A 3'-hydroxy group is left at the tRNA terminus and a 5'-phosphoryl group is left at the trailer molecule.. In terms of biological role, zinc phosphodiesterase, which displays some tRNA 3'-processing endonuclease activity. Probably involved in tRNA maturation, by removing a 3'-trailer from precursor tRNA. This is Ribonuclease Z from Clostridium beijerinckii (strain ATCC 51743 / NCIMB 8052) (Clostridium acetobutylicum).